A 386-amino-acid chain; its full sequence is ABC transporter permease protein NatB (386 aa).

6 consecutive transmembrane segments (helical) span residues 19-39, 172-192, 226-246, 273-293, 300-320, and 353-373; these read TILL…FFYE, AIML…SGAM, WLAV…FLIL, ALII…ISIM, AQSY…FIFS, and ATIL…FLLA.

In terms of assembly, the complex is composed of NatA and NatB.

It is found in the cell membrane. It carries out the reaction Na(+)(in) + ATP + H2O = Na(+)(out) + ADP + phosphate + H(+). Part of an ABC transporter that catalyzes ATP-dependent electrogenic sodium extrusion. The protein is ABC transporter permease protein NatB of Bacillus subtilis (strain 168).